The following is a 369-amino-acid chain: Probable serine/threonine-protein kinase DDB_G0291350 (369 aa).

The Protein kinase domain maps to 22 to 367 (YTVNRILGEG…QVIERINQII (346 aa)). Residues 28 to 36 (LGEGGFSFV) and lysine 51 contribute to the ATP site. The active-site Proton acceptor is the aspartate 159. Residues 169–225 (NLRRPSNNNNNNNNNNNNNNNNNNNNNNNNNNNNNNNNNNNNNNNNNNNNNNNSEDS) are disordered. A compositionally biased stretch (low complexity) spans 175–221 (NNNNNNNNNNNNNNNNNNNNNNNNNNNNNNNNNNNNNNNNNNNNNNN).

This sequence belongs to the protein kinase superfamily. Ser/Thr protein kinase family.

The enzyme catalyses L-seryl-[protein] + ATP = O-phospho-L-seryl-[protein] + ADP + H(+). It carries out the reaction L-threonyl-[protein] + ATP = O-phospho-L-threonyl-[protein] + ADP + H(+). The protein is Probable serine/threonine-protein kinase DDB_G0291350 of Dictyostelium discoideum (Social amoeba).